The chain runs to 58 residues: Ribulose bisphosphate carboxylase large chain (58 aa).

Positions 1 to 2 (MS) are excised as a propeptide. P3 carries the post-translational modification N-acetylproline. N6,N6,N6-trimethyllysine is present on K14.

This sequence belongs to the RuBisCO large chain family. Type I subfamily. As to quaternary structure, heterohexadecamer of 8 large chains and 8 small chains.

The protein localises to the plastid. Its subcellular location is the chloroplast. It carries out the reaction 2 (2R)-3-phosphoglycerate + 2 H(+) = D-ribulose 1,5-bisphosphate + CO2 + H2O. It catalyses the reaction D-ribulose 1,5-bisphosphate + O2 = 2-phosphoglycolate + (2R)-3-phosphoglycerate + 2 H(+). In terms of biological role, ruBisCO catalyzes two reactions: the carboxylation of D-ribulose 1,5-bisphosphate, the primary event in carbon dioxide fixation, as well as the oxidative fragmentation of the pentose substrate in the photorespiration process. Both reactions occur simultaneously and in competition at the same active site. This chain is Ribulose bisphosphate carboxylase large chain (rbcL), found in Weinmannia silvicola (Towai).